We begin with the raw amino-acid sequence, 201 residues long: Natural cytotoxicity triggering receptor 3 (201 aa).

A signal peptide spans 1-18 (MAWMLLLILIMVYPGSCA). In terms of domain architecture, Ig-like spans 19-126 (LWVSQPPEIR…VGTGNGTRLV (108 aa)). The Extracellular segment spans residues 19–133 (LWVSQPPEIR…RLVVEKEYPQ (115 aa)). Cys-39 and Cys-108 are disulfide-bonded. Asn-42 and Asn-121 each carry an N-linked (GlcNAc...) asparagine glycan. A helical transmembrane segment spans residues 134 to 154 (LGAGTVLLLRAGFYAVSFLSV). Over 155–201 (AMGSTLYYQGKCLTWKGPRRQLPAVVPGPLPPPCGSSAHLLPPVPGG) the chain is Cytoplasmic.

Belongs to the natural cytotoxicity receptor (NCR) family. Homodimer in the unliganted form. Interacts with CD3Z. Interacts with and is activated by binding to NCR3LG1. Interacts with and is activated by binding to BAG6. Interacts with and is inhibited by binding to LGALS3.

It is found in the cell membrane. Its function is as follows. Cell membrane receptor of natural killer/NK cells that is activated by binding of extracellular ligands including BAG6 and NCR3LG1. Stimulates NK cells cytotoxicity toward neighboring cells producing these ligands. It controls, for instance, NK cells cytotoxicity against tumor cells. Engagement of NCR3 by BAG6 also promotes myeloid dendritic cells (DC) maturation, both through killing DCs that did not acquire a mature phenotype, and inducing the release by NK cells of TNFA and IFNG that promote DC maturation. In Macaca mulatta (Rhesus macaque), this protein is Natural cytotoxicity triggering receptor 3 (NCR3).